The primary structure comprises 220 residues: Kinetochore protein Spc25 (220 aa).

The stretch at 41 to 119 (ILLDVKEAAA…NEIMERIHTL (79 aa)) forms a coiled coil.

It belongs to the SPC25 family. As to quaternary structure, component of the Ndc80 complex, which is composed of Ndc80, Nuf2 and Spc25.

Its subcellular location is the nucleus. The protein localises to the chromosome. The protein resides in the centromere. It is found in the kinetochore. Acts as a component of the essential kinetochore-associated Ndc80 complex, which is required for chromosome segregation and spindle checkpoint activity during meiosis and mitosis. Required for kinetochore integrity and the organization of stable microtubule binding sites in the outer plate of the kinetochore. Participates in SAC signaling that responds specifically to disruptions in spindle microtubule dynamics. The NDC80 complex synergistically enhances the affinity of the SKA1 complex for microtubules and may allow the NDC80 complex to track depolymerizing microtubules. The chain is Kinetochore protein Spc25 from Drosophila erecta (Fruit fly).